The sequence spans 192 residues: Ion-translocating oxidoreductase complex subunit A (192 aa).

The next 6 membrane-spanning stretches (helical) occupy residues 5–25 (ALIL…FLGL), 39–59 (TGMG…SYLV), 65–85 (APLG…AAVV), 102–122 (VLGI…VALL), 134–154 (ALYG…FASI), and 171–191 (AIAL…IGLV).

The protein belongs to the NqrDE/RnfAE family. In terms of assembly, the complex is composed of six subunits: RnfA, RnfB, RnfC, RnfD, RnfE and RnfG.

The protein localises to the cell inner membrane. In terms of biological role, part of a membrane-bound complex that couples electron transfer with translocation of ions across the membrane. The polypeptide is Ion-translocating oxidoreductase complex subunit A (Thioalkalivibrio sulfidiphilus (strain HL-EbGR7)).